The primary structure comprises 2028 residues: Transient receptor potential cation channel subfamily M member 6 (2028 aa).

Topologically, residues 1 to 747 are cytoplasmic; it reads MQVKKSWIEG…MWMGRLKMRK (747 aa). Residues 577 to 601 form a disordered region; the sequence is QPYKSKEKPEDSQKSKKKSKERQSL. Positions 580–590 are enriched in basic and acidic residues; the sequence is KSKEKPEDSQK. Residues 748-768 traverse the membrane as a helical segment; sequence NSWLKIIISILLPPMILTLEF. Topologically, residues 769-847 are extracellular; the sequence is KSKAEMSHVP…YEFYSAPFVK (79 aa). A helical transmembrane segment spans residues 848-868; it reads FWFYTMAYLAFLMLFTYTVLV. Residues 869–910 are Cytoplasmic-facing; sequence EMQPQPSVHEWLVIIYIFTNAIEKVREICISEPSKFKQKVKM. Residues 911-931 traverse the membrane as a helical segment; the sequence is WLSEYWNLMETVAIGLFAVGF. The Extracellular segment spans residues 932–945; the sequence is GLRWGHPPLQTAGR. A helical transmembrane segment spans residues 946–966; it reads LIYCIDIIFWFSRLMDFFAVN. At 967–978 the chain is on the cytoplasmic side; it reads QHAGPYVTMIAK. The chain crosses the membrane as a helical span at residues 979–999; it reads MAANMFYIVIIMAIVLLSFGV. Topologically, residues 1000 to 1018 are extracellular; it reads ARKAILSPKEPPSWRLARD. Residues 1019–1039 constitute an intramembrane region (pore-forming); sequence IVFEPYWMMYGEVYASDIDVC. Over 1040–1053 the chain is Extracellular; the sequence is SNETSCPPGSFLTP. The chain crosses the membrane as a helical span at residues 1054–1074; that stretch reads FLQAVYLFVQYIIMVNLLIAC. Residues 1075–2028 lie on the Cytoplasmic side of the membrane; sequence FNNIYLDIKS…RSSLEDHTRL (954 aa). 2 stretches are compositionally biased toward basic and acidic residues: residues 1313–1323 and 1665–1677; these read KREASHVREEQ and DHLRQPQENRDKT. 2 disordered regions span residues 1313 to 1339 and 1658 to 1694; these read KREASHVREEQEEREMEQRTTASGISH and RHTTQASDHLRQPQENRDKTPTWNSGSTSLSRSFLTR. A compositionally biased stretch (low complexity) spans 1682-1694; it reads SGSTSLSRSFLTR. The residue at position 1730 (T1730) is a Phosphothreonine; by autocatalysis. Positions 1756-1986 constitute an Alpha-type protein kinase domain; that stretch reads TLDKSMSSWS…CCGKLRLPDL (231 aa). ADP-binding residues include G1783, G1784, L1785, R1786, and K1810. At T1857 the chain carries Phosphothreonine; by autocatalysis. 2 residues coordinate ADP: E1882 and M1885. Residue H1915 coordinates Zn(2+). Catalysis depends on D1929, which acts as the Proton acceptor. Position 1939 (D1939) interacts with ADP. Zn(2+) contacts are provided by H1972, C1974, and C1978. The interval 2009–2028 is disordered; the sequence is TEELPERDKNRSSLEDHTRL. The span at 2012-2028 shows a compositional bias: basic and acidic residues; that stretch reads LPERDKNRSSLEDHTRL.

In the C-terminal section; belongs to the protein kinase superfamily. Alpha-type protein kinase family. ALPK subfamily. It in the N-terminal section; belongs to the transient receptor (TC 1.A.4) family. LTrpC subfamily. TRPM6 sub-subfamily. Forms heteromers with TRPM7; TRPM6 increases the current amplitude of TRPM6/7 heteromers as compared to TRPM7 homomers. Interacts (via kinase domain) with RACK1. Autophosphorylated; autophosphorylation controls the protein kinase activity of TRPM6 towards their substrates. Autophosphorylation of Thr-1857 in the kinase domain is essential for the inhibitory effect of RACK1. Post-translationally, the C-terminus of TRPM6 is proteolytically cleaved in vivo, in a cell type-specific fashion, releasing the kinase module from the transmembrane domain. The cleaved kinase fragments are translocated to the nucleus to phosphorylate histones and regulate gene expression.

The protein resides in the cell membrane. Its subcellular location is the apical cell membrane. The protein localises to the nucleus. It carries out the reaction L-seryl-[protein] + ATP = O-phospho-L-seryl-[protein] + ADP + H(+). The enzyme catalyses L-threonyl-[protein] + ATP = O-phospho-L-threonyl-[protein] + ADP + H(+). The catalysed reaction is Mg(2+)(in) = Mg(2+)(out). It catalyses the reaction Ca(2+)(in) = Ca(2+)(out). It carries out the reaction Zn(2+)(in) = Zn(2+)(out). Strongly inhibited by intracellular Mg(2+); unlikely to be active at physiological levels of intracellular Mg(2+). In the heteromeric TRPM6-TRPM7 channels complexes, TRPM7 are able to offset the very high sensitivity of TRPM6 to cytosolic Mg(2+) to physiologically relevant concentrations, whereas TRPM6 relieve TRPM7 from the inhibitory action of Mg-ATP. Consequently, the association of TRPM6 with TRPM7 allow for high constitutive activity of TRPM6/7 in the presence of physiological levels of Mg(2+) and Mg-ATP. The kinase activity is controlled through the autophosphorylation of a serine/threonine-rich region located to the N-terminal of the catalytic domain. Functionally, bifunctional protein that combines an ion channel with an intrinsic kinase domain, enabling it to modulate cellular functions either by conducting ions through the pore or by phosphorylating downstream proteins via its kinase domain. Crucial for Mg(2+) homeostasis. Has an important role in epithelial magnesium transport and in the active Mg(2+) absorption in the gut and kidney. However, whether TRPM6 forms functional homomeric channels by itself or functions primarily as a subunit of heteromeric TRPM6-TRPM7 channels, is still under debate. In terms of biological role, the C-terminal kinase domain can be cleaved from the channel segment in a cell-type-specific fashion. The cleaved kinase fragments can translocate to the nucleus, and bind chromatin-remodeling complex proteins to ultimately phosphorylate specific Ser/Thr residues of histones known to be functionally important for cell differentiation and development. The polypeptide is Transient receptor potential cation channel subfamily M member 6 (Trpm6) (Mus musculus (Mouse)).